A 141-amino-acid polypeptide reads, in one-letter code: Large ribosomal subunit protein uL11 (141 aa).

This sequence belongs to the universal ribosomal protein uL11 family. In terms of assembly, part of the ribosomal stalk of the 50S ribosomal subunit. Interacts with L10 and the large rRNA to form the base of the stalk. L10 forms an elongated spine to which L12 dimers bind in a sequential fashion forming a multimeric L10(L12)X complex. In terms of processing, one or more lysine residues are methylated.

Functionally, forms part of the ribosomal stalk which helps the ribosome interact with GTP-bound translation factors. This chain is Large ribosomal subunit protein uL11, found in Pediococcus pentosaceus (strain ATCC 25745 / CCUG 21536 / LMG 10740 / 183-1w).